The chain runs to 238 residues: Orotidine 5'-phosphate decarboxylase (238 aa).

Residues Asp10, Lys32, 59–68 (DLKLHDIPNT), Thr122, Arg184, Gln193, Gly213, and Arg214 contribute to the substrate site. The Proton donor role is filled by Lys61.

Belongs to the OMP decarboxylase family. Type 1 subfamily. In terms of assembly, homodimer.

It carries out the reaction orotidine 5'-phosphate + H(+) = UMP + CO2. It functions in the pathway pyrimidine metabolism; UMP biosynthesis via de novo pathway; UMP from orotate: step 2/2. Catalyzes the decarboxylation of orotidine 5'-monophosphate (OMP) to uridine 5'-monophosphate (UMP). This Bacillus cereus (strain AH820) protein is Orotidine 5'-phosphate decarboxylase.